A 493-amino-acid chain; its full sequence is MTPPTPLMVLGTSSGAGKSLMTAALCRVLKRRGEQPLPFKGQNMSNNAWVDQSGGEMAYSQALQSWAAGLEPNCAMNPVLLKPQGNSTSEVIHGGESVGMARAETYYQEWFKPGWLAIRQGLEQLRQQHPHGRLVLEGAGSPVEVNLQHRDLTNLRLAQYLRARCLLVADIERGGVFAQLVGTLQLLRPVERPLVKGLLINRFRGRQELFDPGVSWLSDNTGVPVLGVMPWLDELFPPEDSLDLLERRGRKANAELEIAVLRLPSLSNFSDLDPLEAEPSVQLRWVQPGEALGQPDAVVLPGSKQTLRDLKALQASGLARELQRFSAGGGAVLGICGGLQMLGRELLDPDGLEGAAGASAAGLNLLPLQTRFGGSKALRQRQAVAHWPTAESCPIEGFELHRGSTIALEPLQALCQEEGLGWVQGQVAGSYLHGLLENGRWRRQWLNQLRRRKQLPELAEDQGHHSLQREELLDRLADAFEANVDLTPLISDP.

Positions 255 to 441 (ELEIAVLRLP…LHGLLENGRW (187 aa)) constitute a GATase cobBQ-type domain. The active-site Nucleophile is the Cys336. The active site involves His433.

The protein belongs to the CobB/CobQ family. CobQ subfamily.

The protein operates within cofactor biosynthesis; adenosylcobalamin biosynthesis. In terms of biological role, catalyzes amidations at positions B, D, E, and G on adenosylcobyrinic A,C-diamide. NH(2) groups are provided by glutamine, and one molecule of ATP is hydrogenolyzed for each amidation. The polypeptide is Cobyric acid synthase (Synechococcus sp. (strain RCC307)).